A 580-amino-acid polypeptide reads, in one-letter code: Laccase-6 (580 aa).

The signal sequence occupies residues methionine 1–alanine 22. Plastocyanin-like domains lie at asparagine 30 to alanine 148 and glutamate 158 to alanine 317. 2 N-linked (GlcNAc...) asparagine glycosylation sites follow: asparagine 44 and asparagine 78. Residues histidine 82, histidine 84, histidine 127, and histidine 129 each contribute to the Cu cation site. N-linked (GlcNAc...) asparagine glycans are attached at residues asparagine 306, asparagine 335, asparagine 385, asparagine 397, and asparagine 462. Residues aspartate 424–proline 564 form the Plastocyanin-like 3 domain. Cu cation contacts are provided by histidine 480, histidine 483, histidine 485, histidine 543, cysteine 544, histidine 545, and histidine 549.

This sequence belongs to the multicopper oxidase family. The cofactor is Cu cation.

The protein resides in the secreted. Its subcellular location is the extracellular space. It localises to the apoplast. It catalyses the reaction 4 hydroquinone + O2 = 4 benzosemiquinone + 2 H2O. Its function is as follows. Lignin degradation and detoxification of lignin-derived products. This chain is Laccase-6 (LAC6), found in Oryza sativa subsp. japonica (Rice).